The sequence spans 261 residues: Undecaprenyl-diphosphatase (261 aa).

The next 7 membrane-spanning stretches (helical) occupy residues 38–58 (RSDF…TFVF), 75–95 (RDYV…GLAV), 106–126 (IQPI…AESV), 136–156 (VTWS…VFPG), 181–201 (FSFL…CFEL), 217–237 (VAFV…LGYI), and 241–261 (SFAP…TWLT).

Belongs to the UppP family.

It is found in the cell inner membrane. It catalyses the reaction di-trans,octa-cis-undecaprenyl diphosphate + H2O = di-trans,octa-cis-undecaprenyl phosphate + phosphate + H(+). Functionally, catalyzes the dephosphorylation of undecaprenyl diphosphate (UPP). Confers resistance to bacitracin. This is Undecaprenyl-diphosphatase from Xylella fastidiosa (strain Temecula1 / ATCC 700964).